A 529-amino-acid chain; its full sequence is T-complex protein 1 subunit beta (529 aa).

Belongs to the TCP-1 chaperonin family. In terms of assembly, heterooligomeric complex of about 850 to 900 kDa that forms two stacked rings, 12 to 16 nm in diameter.

It localises to the cytoplasm. In terms of biological role, molecular chaperone; assists the folding of proteins upon ATP hydrolysis. Known to play a role, in vitro, in the folding of actin and tubulin. This Caenorhabditis elegans protein is T-complex protein 1 subunit beta (cct-2).